A 904-amino-acid polypeptide reads, in one-letter code: Protein argonaute 4A (904 aa).

Disordered stretches follow at residues 1–33 (MESNSGEIEELPPPPPLPPNAEPIKTDDTKKLS) and 143–166 (KSSANGGSPGNDSPGNDRKRVRRP). The span at 11–21 (LPPPPPLPPNA) shows a compositional bias: pro residues. Residues 144-156 (SSANGGSPGNDSP) show a composition bias toward low complexity. The PAZ domain maps to 274-388 (PVVDFLLANQ…FPIELCSLVP (115 aa)). The Piwi domain maps to 557 to 865 (FLLCVLAERK…AAAQVSQFIK (309 aa)). The segment at 871–890 (ETSSSHGGHTSAGSAPVPEL) is disordered. The segment covering 872 to 885 (TSSSHGGHTSAGSA) has biased composition (low complexity).

Belongs to the argonaute family. Ago subfamily.

Probably involved in the RNA silencing pathway. May bind to short RNAs such as microRNAs (miRNAs) or short interfering RNAs (siRNAs), and represses the translation of mRNAs which are complementary to them. In Oryza sativa subsp. japonica (Rice), this protein is Protein argonaute 4A (AGO4A).